Reading from the N-terminus, the 340-residue chain is GTPase Obg (340 aa).

Positions 1–159 (MKFLDQAKVY…RTLWLRLKLI (159 aa)) constitute an Obg domain. The OBG-type G domain maps to 160-327 (ADAGIIGLPN…LLRAGAHIIE (168 aa)). Residues 166-173 (GLPNAGKS), 191-195 (FTTLY), 212-215 (DIPG), 279-282 (SQID), and 308-310 (SAV) each bind GTP. Residues S173 and T193 each coordinate Mg(2+).

The protein belongs to the TRAFAC class OBG-HflX-like GTPase superfamily. OBG GTPase family. Monomer. The cofactor is Mg(2+).

It is found in the cytoplasm. Its function is as follows. An essential GTPase which binds GTP, GDP and possibly (p)ppGpp with moderate affinity, with high nucleotide exchange rates and a fairly low GTP hydrolysis rate. Plays a role in control of the cell cycle, stress response, ribosome biogenesis and in those bacteria that undergo differentiation, in morphogenesis control. This chain is GTPase Obg, found in Bartonella henselae (strain ATCC 49882 / DSM 28221 / CCUG 30454 / Houston 1) (Rochalimaea henselae).